The following is a 221-amino-acid chain: Ribosomal RNA large subunit methyltransferase E (221 aa).

S-adenosyl-L-methionine contacts are provided by G60, W62, D89, D105, and D134. K174 (proton acceptor) is an active-site residue. The segment at K199–G221 is disordered.

The protein belongs to the class I-like SAM-binding methyltransferase superfamily. RNA methyltransferase RlmE family.

The protein localises to the cytoplasm. The catalysed reaction is uridine(2552) in 23S rRNA + S-adenosyl-L-methionine = 2'-O-methyluridine(2552) in 23S rRNA + S-adenosyl-L-homocysteine + H(+). Its function is as follows. Specifically methylates the uridine in position 2552 of 23S rRNA at the 2'-O position of the ribose in the fully assembled 50S ribosomal subunit. The sequence is that of Ribosomal RNA large subunit methyltransferase E from Ralstonia nicotianae (strain ATCC BAA-1114 / GMI1000) (Ralstonia solanacearum).